Consider the following 1385-residue polypeptide: L-2-aminoadipate reductase large subunit (1385 aa).

The 78-residue stretch at 843-920 (SSFSPLEQEI…ELAKEISRVR (78 aa)) folds into the Carrier domain. Position 880 is an O-(pantetheine 4'-phosphoryl)serine (Ser880).

It belongs to the ATP-dependent AMP-binding enzyme family. As to quaternary structure, heterodimer of an alpha and a beta subunit. It depends on pantetheine 4'-phosphate as a cofactor.

It catalyses the reaction (S)-2-amino-6-oxohexanoate + NADP(+) + H2O = L-2-aminoadipate + NADPH + 2 H(+). It carries out the reaction (S)-2-amino-6-oxohexanoate + NAD(+) + H2O = L-2-aminoadipate + NADH + 2 H(+). The enzyme catalyses (S)-2-amino-6-oxohexanoate + AMP + diphosphate + NADP(+) = L-2-aminoadipate + ATP + NADPH + H(+). It participates in amino-acid biosynthesis; L-lysine biosynthesis via AAA pathway; L-lysine from L-alpha-aminoadipate (fungal route): step 1/3. Catalyzes the activation of alpha-aminoadipate by ATP-dependent adenylation and the reduction of activated alpha-aminoadipate by NADPH. The activated alpha-aminoadipate is bound to the phosphopantheinyl group of the enzyme itself before it is reduced to (S)-2-amino-6-oxohexanoate. This Eremothecium gossypii (strain ATCC 10895 / CBS 109.51 / FGSC 9923 / NRRL Y-1056) (Yeast) protein is L-2-aminoadipate reductase large subunit (LYS2).